A 408-amino-acid chain; its full sequence is 5-hydroxytryptamine receptor 1A (408 aa).

Residues 1–32 (MDASNNTTSWNILQRGRMGPSWRRCPVSYQII) lie on the Extracellular side of the membrane. 2 N-linked (GlcNAc...) asparagine glycosylation sites follow: Asn5 and Asn6. Residues 33–53 (ASLFLGRSFSAGIFGNACVIA) form a helical membrane-spanning segment. The Cytoplasmic segment spans residues 54-67 (AIALERSLQNVANY). The helical transmembrane segment at 68–92 (LIGSLAVTDLMVSVLVLPMAAQNQV) threads the bilayer. Topologically, residues 93–101 (LNKWTLGQV) are extracellular. The helical transmembrane segment at 102–126 (TCDIFISLDVLCCTSSILHLCAIAL) threads the bilayer. Cysteines 103 and 181 form a disulfide. Serotonin is bound by residues Asp110 and Cys114. The short motif at 127–129 (DRY) is the DRY motif; important for ligand-induced conformation changes element. The Cytoplasmic segment spans residues 127–146 (DRYWAITDPIDYVNKRTPRR). Residues 147-168 (AAVLISITWIVGFSISIPPMLG) form a helical membrane-spanning segment. The Extracellular segment spans residues 169–187 (WRTPEDRSDPNACRISEDP). The helical transmembrane segment at 188 to 210 (GYTIYSTFGAFYIPLILMLVLYG) threads the bilayer. The Cytoplasmic portion of the chain corresponds to 211-333 (KIFKAARFRI…LARERKTVKT (123 aa)). The interval 235–255 (TCLSVSQQSPKEKQRGAQQEL) is disordered. 1D-myo-inositol 4-phosphate-binding residues include Lys332, Thr333, and Gly339. A helical transmembrane segment spans residues 334–357 (LGIIMGTFILCWLPFFIVALVLPF). Residues 358–364 (CETCHMP) lie on the Extracellular side of the membrane. The helical transmembrane segment at 365 to 389 (HLLFDIITWLGYSNSLLNPIIYAYF) threads the bilayer. The short motif at 382 to 386 (NPIIY) is the NPxxY motif; important for ligand-induced conformation changes and signaling element. 1D-myo-inositol 4-phosphate-binding residues include Phe389, Asn390, and Lys391. At 390-408 (NKDFQSAFKKIIKCKFCRQ) the chain is on the cytoplasmic side.

It belongs to the G-protein coupled receptor 1 family. 5-hydroxytryptamine receptor subfamily. HTR1A sub-subfamily. In terms of tissue distribution, first expressed in the rostral part of the brain stem at stage 22. At later stages of development, expression is localized to serotonergic neurons. The expression pattern changes in the tadpole of stage 41 where, in addition to serotonergic neurons, expression is also localized to the inner nuclear layer (INL) of the developing retina. This expression pattern continues through to the start of metamorphosis (stage 46). In adults, expressed in the brain, in particular the telencephalon, diencephalon and mesencephalon. In the telencephalic region, expression is localized to the lateral, dorsal and medial pallium, and in the striatum, septum and amygdala. In the mesencephalic region, expression is strongest in the optic tectum and torus semicircularis with moderate levels of expression in tegmental nuclei. In diencephalon, localized to the dorsal and ventral thalamus and the preoptic area of the hypothalamus.

Its subcellular location is the cell membrane. With respect to regulation, G-protein coupled receptor activity is regulated by lipids: phosphatidylinositol 4-phosphate increases HTR1A-mediated activity. Functionally, G-protein coupled receptor for 5-hydroxytryptamine (serotonin). Also functions as a receptor for various drugs and psychoactive substances. Ligand binding causes a conformation change that triggers signaling via guanine nucleotide-binding proteins (G proteins) and modulates the activity of downstream effectors, such as adenylate cyclase. HTR1A is coupled to G(i)/G(o) G alpha proteins and mediates inhibitory neurotransmission: signaling inhibits adenylate cyclase activity and activates a phosphatidylinositol-calcium second messenger system that regulates the release of Ca(2+) ions from intracellular stores. Beta-arrestin family members regulate signaling by mediating both receptor desensitization and resensitization processes. Activation of the receptor may play a role in the exit from G0 phase and in promoting DNA synthesis. This Xenopus laevis (African clawed frog) protein is 5-hydroxytryptamine receptor 1A.